The following is a 284-amino-acid chain: uncharacterized protein (284 aa).

The first 24 residues, 1-24 (MLYSRESRTTVLFLALVTSLTVLC), serve as a signal peptide directing secretion. The Cytoplasmic portion of the chain corresponds to 25–84 (HSVDVTTVFTTSTITEITTVTAAPQPQNKAETALNTATNIIQTMQFLFNCAPFKWKGPLK). The helical transmembrane segment at 85 to 104 (ITSCALNFIVLLLTAWGYLL) threads the bilayer. Over 105 to 284 (KYLQENKLNS…SVHMYSSSLL (180 aa)) the chain is Extracellular. Asn270 is a glycosylation site (N-linked (GlcNAc...) asparagine).

The protein to yeast YNL019c.

It is found in the cell membrane. This is an uncharacterized protein from Saccharomyces cerevisiae (strain ATCC 204508 / S288c) (Baker's yeast).